The following is a 405-amino-acid chain: Elongation factor Tu (405 aa).

Residues 10–215 enclose the tr-type G domain; that stretch reads KPHVNIGTIG…AVDSYIPTPE (206 aa). A G1 region spans residues 19–26; it reads GHVDHGKT. GTP is bound at residue 19 to 26; it reads GHVDHGKT. Thr26 is a binding site for Mg(2+). Residues 61 to 65 form a G2 region; the sequence is GITIN. The segment at 82–85 is G3; that stretch reads DCPG. Residues 82–86 and 137–140 contribute to the GTP site; these read DCPGH and NKVD. The interval 137-140 is G4; it reads NKVD. Residues 175–177 are G5; that stretch reads SAL.

Belongs to the TRAFAC class translation factor GTPase superfamily. Classic translation factor GTPase family. EF-Tu/EF-1A subfamily. In terms of assembly, monomer.

It is found in the cytoplasm. The enzyme catalyses GTP + H2O = GDP + phosphate + H(+). In terms of biological role, GTP hydrolase that promotes the GTP-dependent binding of aminoacyl-tRNA to the A-site of ribosomes during protein biosynthesis. The polypeptide is Elongation factor Tu (Deinococcus radiodurans (strain ATCC 13939 / DSM 20539 / JCM 16871 / CCUG 27074 / LMG 4051 / NBRC 15346 / NCIMB 9279 / VKM B-1422 / R1)).